The chain runs to 512 residues: FAD-linked oxidoreductase iacH (512 aa).

Positions 1–22 (MVSLKACVVAYGFTLLPALVSG) are cleaved as a signal peptide. Residues asparagine 39, asparagine 55, asparagine 69, asparagine 210, asparagine 217, asparagine 278, asparagine 295, and asparagine 367 are each glycosylated (N-linked (GlcNAc...) asparagine). The region spanning 77 to 248 (LDTPDVQLVV…TSLEKKIYPG (172 aa)) is the FAD-binding PCMH-type domain.

This sequence belongs to the oxygen-dependent FAD-linked oxidoreductase family. The cofactor is FAD.

The protein operates within secondary metabolite biosynthesis. Functionally, FAD-linked oxidoreductase; part of the gene cluster that mediates the biosynthesis of iso-A82775C, a enylepoxycyclohexane and biosynthetic precursor of the chloropestolide anticancer natural products. Within the cluster, the prenyltransferase iacE prenylates siccayne to generate pestalodiol E, using dimethylallyl diphosphate (DMAPP) as cosubstrate. The probable oxidoreductase iacF is then involved in the epoxidation of pestalodiol F to pestalodiol F, which is further converted to pestalofone A by the short-chain dehydrogenase/reductase iacG. Iso-A82775C is subsequently generated from pestalofone A by the short-chain dehydrogenase/reductase iacC. Iso-A82775C is further condensed with maldoxin via a Diels-Alder reaction to produce the anticancer natural products chloropestolides A to E. In Pestalotiopsis fici (strain W106-1 / CGMCC3.15140), this protein is FAD-linked oxidoreductase iacH.